We begin with the raw amino-acid sequence, 38 residues long: Humanin-like protein (38 aa).

As to expression, in the testis, expressed in Leydig cells at 10, 20 and 60 days of age (at protein level). Also expressed in pachytene spermatocytes at day 20 and in vessels, peritubular cells and spermatids at day 60. Not detected in Sertoli cells (at protein level). In the adult ovary, expressed in stromal cells, granulosa cells, theca cells and oocytes at diestrus and proestrus (at protein level). Expressed in the anterior pituitary where it is detected in lactotropes and somatotropes with lower levels in females than males (at protein level). In the hippocampus, expressed in astrocytes but not in neurons or oligodendrocytes (at protein level). Expressed in muscle, liver and hypothalamus but not in epididymal fat (at protein level). Widely expressed with highest levels in cardiac and skeletal muscle and lowest levels in lung, testis and uterus. In the CNS, levels are relatively high in the cerebellum and cortex and low in the hippocampus. In the hippocampus, lower levels are detected in ovariectomized animals than in controls.

The protein resides in the mitochondrion. It localises to the secreted. It is found in the cytoplasm. Plays a role as a neuroprotective factor. Protects against neuronal cell death induced by amyloid-beta peptides. Also protects against excitotoxic cell death. Prevents amyloid-beta peptide-induced spatial learning and memory impairments, protects against amyloid-beta peptide-induced suppression of hippocampal long-term potentiation, and inhibits amyloid-beta peptide-induced activation of STAT3 and inhibition of CASP3. Prevents glutamate-induced dendritic atrophy in hippocampal neurons and also prevents glutamate-induced decrease in SYP puncta number and total puncta area. Protects anterior pituitary cells from TNF-induced apoptosis. Plays a role in ovarian follicle development by acting as a cryoprotective factor for granulosa cells in the antral follicle. Increases androgen production in Leydig cells and promotes Leydig cell survival by preventing apoptosis. The sequence is that of Humanin-like protein from Rattus norvegicus (Rat).